The primary structure comprises 264 residues: Thymidylate synthase (264 aa).

Residue Arg21 participates in dUMP binding. His51 contributes to the (6R)-5,10-methylene-5,6,7,8-tetrahydrofolate binding site. 126–127 (RR) is a dUMP binding site. Cys146 functions as the Nucleophile in the catalytic mechanism. DUMP contacts are provided by residues 166-169 (RSAD), Asn177, and 207-209 (HIY). (6R)-5,10-methylene-5,6,7,8-tetrahydrofolate is bound at residue Asp169. Ala263 is a binding site for (6R)-5,10-methylene-5,6,7,8-tetrahydrofolate.

This sequence belongs to the thymidylate synthase family. Bacterial-type ThyA subfamily. As to quaternary structure, homodimer.

The protein localises to the cytoplasm. The enzyme catalyses dUMP + (6R)-5,10-methylene-5,6,7,8-tetrahydrofolate = 7,8-dihydrofolate + dTMP. Its pathway is pyrimidine metabolism; dTTP biosynthesis. Its function is as follows. Catalyzes the reductive methylation of 2'-deoxyuridine-5'-monophosphate (dUMP) to 2'-deoxythymidine-5'-monophosphate (dTMP) while utilizing 5,10-methylenetetrahydrofolate (mTHF) as the methyl donor and reductant in the reaction, yielding dihydrofolate (DHF) as a by-product. This enzymatic reaction provides an intracellular de novo source of dTMP, an essential precursor for DNA biosynthesis. In Cupriavidus metallidurans (strain ATCC 43123 / DSM 2839 / NBRC 102507 / CH34) (Ralstonia metallidurans), this protein is Thymidylate synthase.